Reading from the N-terminus, the 1068-residue chain is Ubiquitin-protein ligase E3B (1068 aa).

An N-acetylmethionine modification is found at Met-1. The IQ domain maps to 29-58 (RERAAVVIQAHVRSFLCRSRLQRDIRREID). Phosphoserine is present on Ser-419. The HECT domain occupies 702–1068 (SQHAMKGVIR…ISMNTGFELS (367 aa)). Cys-1036 acts as the Glycyl thioester intermediate in catalysis.

Widely expressed.

It is found in the postsynaptic density. It carries out the reaction S-ubiquitinyl-[E2 ubiquitin-conjugating enzyme]-L-cysteine + [acceptor protein]-L-lysine = [E2 ubiquitin-conjugating enzyme]-L-cysteine + N(6)-ubiquitinyl-[acceptor protein]-L-lysine.. Its pathway is protein modification; protein ubiquitination. Functionally, E3 ubiquitin-protein ligase which accepts ubiquitin from an E2 ubiquitin-conjugating enzyme in the form of a thioester and then directly transfers the ubiquitin to targeted substrates. Ubiquitinates BCKDK and targets it for degradation, thereby regulating various metabolic processes. Involved in the positive regulation of neurite branching in hippocampal neurons and the control of neuronal spine number and morphology, through the ubiquitination of PPP3CC. This is Ubiquitin-protein ligase E3B (UBE3B) from Homo sapiens (Human).